The following is a 68-amino-acid chain: Serine rich endogenous peptide 22 (68 aa).

An N-terminal signal peptide occupies residues 1 to 25 (MNKALVWLITLLFLIFSATPNRVLA). The SCOOP motif signature appears at 50-64 (KIGVGASNSGHSPGA). Residues 56–58 (SNS) carry the SxS motif essential for MIK2 binding motif.

The protein belongs to the serine rich endogenous peptide (SCOOP) phytocytokine family. Interacts with MIK2 (via extracellular leucine-rich repeat domain); this interaction triggers the formation of complex between MIK2 and the BAK1/SERK3 and SERK4 coreceptors, and subsequent BAK1 activation by phosphorylation.

The protein localises to the cell membrane. It localises to the secreted. The protein resides in the extracellular space. It is found in the apoplast. In terms of biological role, brassicaceae-specific phytocytokine (plant endogenous peptide released into the apoplast) perceived by MIK2 in a BAK1/SERK3 and SERK4 coreceptors-dependent manner, that modulates various physiological and antimicrobial processes including growth prevention and reactive oxygen species (ROS) response regulation. This is Serine rich endogenous peptide 22 from Arabidopsis thaliana (Mouse-ear cress).